We begin with the raw amino-acid sequence, 89 residues long: Small ribosomal subunit protein uS19 (89 aa).

The protein belongs to the universal ribosomal protein uS19 family.

In terms of biological role, protein S19 forms a complex with S13 that binds strongly to the 16S ribosomal RNA. This Stenotrophomonas maltophilia (strain R551-3) protein is Small ribosomal subunit protein uS19.